The sequence spans 206 residues: dTTP/UTP pyrophosphatase (206 aa).

Asp-87 functions as the Proton acceptor in the catalytic mechanism.

This sequence belongs to the Maf family. YhdE subfamily. A divalent metal cation serves as cofactor.

Its subcellular location is the cytoplasm. The enzyme catalyses dTTP + H2O = dTMP + diphosphate + H(+). It catalyses the reaction UTP + H2O = UMP + diphosphate + H(+). In terms of biological role, nucleoside triphosphate pyrophosphatase that hydrolyzes dTTP and UTP. May have a dual role in cell division arrest and in preventing the incorporation of modified nucleotides into cellular nucleic acids. The protein is dTTP/UTP pyrophosphatase of Aromatoleum aromaticum (strain DSM 19018 / LMG 30748 / EbN1) (Azoarcus sp. (strain EbN1)).